A 372-amino-acid chain; its full sequence is MNSGIDLQGTFIESLRDLGIPAGTAKAIWMPLPMILMLIGATVGVLVATWLERKISASAQQRIGPEYQGPFGLLVPVADGLKLVFKEDIVPAKSDPWLFTLGPIIVVIPVFLSFLIVPFGQNIVISNVGMGVFLWIALSSIQPIGLLMAGYASNNKYSLLGGLRAAAQSISYEIPLALAVLAIAMMSNSLSTVDIVNQQSGYGILGWNIWRQPIGFLIFWIAALAECERLPFDLPEAEEEIVAGYQTEYSGMKFGLFYLGSYVNLILSSLLVAILYLGGWDFPIPLNLIAGWLGVSELNPVFQIITASLGITMTVFKAYLLVFVAILLRWTVPRVRIDQLLDLGWKFLLPVGLVNLLLTAALKLAFPFAFGG.

8 helical membrane-spanning segments follow: residues 27-47 (AIWM…GVLV), 97-117 (WLFT…FLIV), 128-148 (VGMG…GLLM), 166-186 (AAQS…IAMM), 204-224 (ILGW…IAAL), 249-269 (YSGM…ILSS), 308-328 (SLGI…AILL), and 351-371 (VGLV…FAFG).

Belongs to the complex I subunit 1 family. In terms of assembly, NDH-1 is composed of at least 11 different subunits.

It is found in the cellular thylakoid membrane. The catalysed reaction is a plastoquinone + NADH + (n+1) H(+)(in) = a plastoquinol + NAD(+) + n H(+)(out). It catalyses the reaction a plastoquinone + NADPH + (n+1) H(+)(in) = a plastoquinol + NADP(+) + n H(+)(out). Its function is as follows. NDH-1 shuttles electrons from an unknown electron donor, via FMN and iron-sulfur (Fe-S) centers, to quinones in the respiratory and/or the photosynthetic chain. The immediate electron acceptor for the enzyme in this species is believed to be plastoquinone. Couples the redox reaction to proton translocation, and thus conserves the redox energy in a proton gradient. This Nostoc punctiforme (strain ATCC 29133 / PCC 73102) protein is NAD(P)H-quinone oxidoreductase subunit 1.